A 568-amino-acid chain; its full sequence is AT-rich interactive domain-containing protein 3B (568 aa).

The residue at position 1 (methionine 1) is an N-acetylmethionine. The segment covering 1–22 (MEPLQQQQQQQQQKQPQQPLLQ) has biased composition (low complexity). The tract at residues 1 to 174 (MEPLQQQQQQ…SVPTAGQPSW (174 aa)) is disordered. The residue at position 87 (serine 87) is a Phosphoserine. Acidic residues predominate over residues 88 to 107 (EPEEEEGGLEDEDGDDDVAE). Over residues 151 to 160 (TKEDHTKDAS) the composition is skewed to basic and acidic residues. The interaction with RB1 stretch occupies residues 201–374 (SRDFAKLYEL…SSPKIRFSIL (174 aa)). One can recognise an ARID domain in the interval 213–305 (DPERKEFLDD…YLYAYECEKK (93 aa)). Phosphoserine is present on serine 309. Arginine 370 is modified (asymmetric dimethylarginine). The segment at 378–403 (SSSGTSASSPRIPPASTLRKGDGVPV) is disordered. Residues 425-522 (GPLEHLRERL…GVLFAQKPVV (98 aa)) enclose the REKLES domain. The interval 495–518 (SNIGSINMSVDIDGTTYTGVLFAQ) is interaction with ARID3A. Low complexity predominate over residues 529 to 559 (TPQSIGSSASSSNSSSSHCSPSPTSSRGTPS). Residues 529–568 (TPQSIGSSASSSNSSSSHCSPSPTSSRGTPSAEPSTSWSL) form a disordered region.

Heterodimer with ARID3A. Interacts with unphosphorylated RB1. As to expression, expressed at high levels in testis. Also expressed in prostate, thyroid and thymus.

It localises to the nucleus. In terms of biological role, transcription factor involved in the production of cranial mesenchymal tissues. Favors nuclear targeting of ARID3A. The sequence is that of AT-rich interactive domain-containing protein 3B (Arid3b) from Mus musculus (Mouse).